Consider the following 156-residue polypeptide: Ribonuclease ageritin (156 aa).

A signal peptide spans 1–21 (MSESSTFTTAVVPEGEGVAPM). The active site involves His98. Asn100 and Asn139 each carry an N-linked (GlcNAc...) asparagine glycan.

This sequence belongs to the ribotoxin-like family. Monomer. Requires Mg(2+) as cofactor.

The protein localises to the vacuole lumen. It catalyses the reaction a 28S rRNA containing guanosine-adenosine pair + H2O = an [RNA fragment]-3'-adenosine-3'-phosphate + a 5'-a hydroxy-guanosine-3'-[RNA fragment].. With respect to regulation, in contrast to most ribotoxins, activity is completely inhibited by EDTA. Its function is as follows. Fungal ribonuclease involved in fungal defense. Highly specific and highly toxic fungal endonuclease that cleaves a single phosphodiester bond in the 28S RNA of eukaryotic ribosomes at a universally conserved GAGA tetraloop of the sarcin-ricin loop (SRL). The damage of the SRL inhibits the binding of translation elongation factors and halts protein biosynthesis, ultimately resulting in the death of the target cells. Shows antitumor activity. Exerts cytotoxicity and induces apoptosis towards rat glial cells and human glioma cells, and also displays some activity towards human neurolastoma cell lines. Shows a strong entomotoxicity against Aedes aegypti larvae, yet no nematotoxicity against nematodes. In Cyclocybe aegerita (Black poplar mushroom), this protein is Ribonuclease ageritin.